Here is a 219-residue protein sequence, read N- to C-terminus: uncharacterized protein (219 aa).

The first 17 residues, Met-1 to Ser-17, serve as a signal peptide directing secretion. A lipid anchor (N-palmitoyl cysteine) is attached at Cys-18. Cys-18 carries S-diacylglycerol cysteine lipidation. Residues Lys-110–Ser-136 form a disordered region. The segment covering Glu-112–Lys-126 has biased composition (polar residues). A coiled-coil region spans residues Tyr-137–Cys-165.

The protein localises to the cell membrane. This is an uncharacterized protein from Rickettsia prowazekii (strain Madrid E).